We begin with the raw amino-acid sequence, 271 residues long: Putative hydro-lyase Mrad2831_3350 (271 aa).

The protein belongs to the D-glutamate cyclase family.

The polypeptide is Putative hydro-lyase Mrad2831_3350 (Methylobacterium radiotolerans (strain ATCC 27329 / DSM 1819 / JCM 2831 / NBRC 15690 / NCIMB 10815 / 0-1)).